A 208-amino-acid polypeptide reads, in one-letter code: 3-demethoxyubiquinol 3-hydroxylase (208 aa).

Positions 57, 87, 90, 139, 171, and 174 each coordinate Fe cation.

It belongs to the COQ7 family. Fe cation is required as a cofactor.

It localises to the cell membrane. The enzyme catalyses a 5-methoxy-2-methyl-3-(all-trans-polyprenyl)benzene-1,4-diol + AH2 + O2 = a 3-demethylubiquinol + A + H2O. It functions in the pathway cofactor biosynthesis; ubiquinone biosynthesis. Functionally, catalyzes the hydroxylation of 2-nonaprenyl-3-methyl-6-methoxy-1,4-benzoquinol during ubiquinone biosynthesis. The chain is 3-demethoxyubiquinol 3-hydroxylase from Burkholderia vietnamiensis (strain G4 / LMG 22486) (Burkholderia cepacia (strain R1808)).